Consider the following 297-residue polypeptide: tRNA (guanine(37)-N(1))/4-demethylwyosine(37)-methyltransferase Taw22 (297 aa).

S-adenosyl-L-methionine-binding positions include Arg-89, Phe-106, and 128–129; that span reads EL.

It belongs to the class I-like SAM-binding methyltransferase superfamily. TRM5/TYW2 family.

It is found in the cytoplasm. It catalyses the reaction guanosine(37) in tRNA + S-adenosyl-L-methionine = N(1)-methylguanosine(37) in tRNA + S-adenosyl-L-homocysteine + H(+). The catalysed reaction is 4-demethylwyosine(37) in tRNA(Phe) + S-adenosyl-L-methionine = isowyosine(37) in tRNA(Phe) + S-adenosyl-L-homocysteine + H(+). Its function is as follows. Catalyzes both the N1-methylation of guanosine and the C7-methylation of 4-demethylwyosine (imG-14) at position 37 in tRNA(Phe). This chain is tRNA (guanine(37)-N(1))/4-demethylwyosine(37)-methyltransferase Taw22, found in Nanoarchaeum equitans (strain Kin4-M).